Reading from the N-terminus, the 554-residue chain is Formate--tetrahydrofolate ligase (554 aa).

64-71 (TPAGEGKS) is an ATP binding site.

It belongs to the formate--tetrahydrofolate ligase family.

It catalyses the reaction (6S)-5,6,7,8-tetrahydrofolate + formate + ATP = (6R)-10-formyltetrahydrofolate + ADP + phosphate. The protein operates within one-carbon metabolism; tetrahydrofolate interconversion. This chain is Formate--tetrahydrofolate ligase, found in Leuconostoc citreum (strain KM20).